The primary structure comprises 491 residues: Argininosuccinate lyase (491 aa).

The protein belongs to the lyase 1 family. Argininosuccinate lyase subfamily.

The protein resides in the cytoplasm. It catalyses the reaction 2-(N(omega)-L-arginino)succinate = fumarate + L-arginine. It participates in amino-acid biosynthesis; L-arginine biosynthesis; L-arginine from L-ornithine and carbamoyl phosphate: step 3/3. This is Argininosuccinate lyase from Methanosarcina mazei (strain ATCC BAA-159 / DSM 3647 / Goe1 / Go1 / JCM 11833 / OCM 88) (Methanosarcina frisia).